We begin with the raw amino-acid sequence, 1386 residues long: DNA-directed RNA polymerase subunit beta'' (1386 aa).

The Zn(2+) site is built by C220, C289, C296, and C299.

The protein belongs to the RNA polymerase beta' chain family. RpoC2 subfamily. As to quaternary structure, in plastids the minimal PEP RNA polymerase catalytic core is composed of four subunits: alpha, beta, beta', and beta''. When a (nuclear-encoded) sigma factor is associated with the core the holoenzyme is formed, which can initiate transcription. Zn(2+) serves as cofactor.

Its subcellular location is the plastid. It is found in the chloroplast. The catalysed reaction is RNA(n) + a ribonucleoside 5'-triphosphate = RNA(n+1) + diphosphate. In terms of biological role, DNA-dependent RNA polymerase catalyzes the transcription of DNA into RNA using the four ribonucleoside triphosphates as substrates. This is DNA-directed RNA polymerase subunit beta'' from Marchantia polymorpha (Common liverwort).